A 360-amino-acid polypeptide reads, in one-letter code: GDSL esterase/lipase At1g06990 (360 aa).

A signal peptide spans 1–22 (MLIHVIIFMIITTMQFSTTCHA). Asn26 and Asn31 each carry an N-linked (GlcNAc...) asparagine glycan. Ser44 (nucleophile) is an active-site residue. Asn73, Asn126, and Asn272 each carry an N-linked (GlcNAc...) asparagine glycan. Catalysis depends on residues Asp335 and His338.

The protein belongs to the 'GDSL' lipolytic enzyme family.

The protein resides in the secreted. This is GDSL esterase/lipase At1g06990 from Arabidopsis thaliana (Mouse-ear cress).